The sequence spans 195 residues: Segregation and condensation protein B (195 aa).

Belongs to the ScpB family. In terms of assembly, homodimer. Homodimerization may be required to stabilize the binding of ScpA to the Smc head domains. Component of a cohesin-like complex composed of ScpA, ScpB and the Smc homodimer, in which ScpA and ScpB bind to the head domain of Smc. The presence of the three proteins is required for the association of the complex with DNA.

The protein localises to the cytoplasm. Functionally, participates in chromosomal partition during cell division. May act via the formation of a condensin-like complex containing Smc and ScpA that pull DNA away from mid-cell into both cell halves. The protein is Segregation and condensation protein B of Clostridium perfringens (strain SM101 / Type A).